A 280-amino-acid chain; its full sequence is Large ribosomal subunit protein uL2cz/uL2cy (280 aa).

Disordered stretches follow at residues 1–25 (MAIH…VKSN) and 231–280 (PVDH…RRTK).

Belongs to the universal ribosomal protein uL2 family. In terms of assembly, part of the 50S ribosomal subunit.

It is found in the plastid. Its subcellular location is the chloroplast. The polypeptide is Large ribosomal subunit protein uL2cz/uL2cy (rpl2-A) (Platanus occidentalis (Sycamore)).